We begin with the raw amino-acid sequence, 20 residues long: Cytochrome c oxidase subunit 5B heart, mitochondrial (20 aa).

The segment at 1–20 is disordered; that stretch reads XXLKGIPTDEEQATGLEEYA.

This sequence belongs to the cytochrome c oxidase subunit 5B family. Component of the cytochrome c oxidase (complex IV, CIV), a multisubunit enzyme composed of 14 subunits. The complex is composed of a catalytic core of 3 subunits MT-CO1, MT-CO2 and MT-CO3, encoded in the mitochondrial DNA, and 11 supernumerary subunits COX4I, COX5A, COX5B, COX6A, COX6B, COX6C, COX7A, COX7B, COX7C, COX8 and NDUFA4, which are encoded in the nuclear genome. The complex exists as a monomer or a dimer and forms supercomplexes (SCs) in the inner mitochondrial membrane with NADH-ubiquinone oxidoreductase (complex I, CI) and ubiquinol-cytochrome c oxidoreductase (cytochrome b-c1 complex, complex III, CIII), resulting in different assemblies (supercomplex SCI(1)III(2)IV(1) and megacomplex MCI(2)III(2)IV(2)).

The protein localises to the mitochondrion inner membrane. The protein operates within energy metabolism; oxidative phosphorylation. Component of the cytochrome c oxidase, the last enzyme in the mitochondrial electron transport chain which drives oxidative phosphorylation. The respiratory chain contains 3 multisubunit complexes succinate dehydrogenase (complex II, CII), ubiquinol-cytochrome c oxidoreductase (cytochrome b-c1 complex, complex III, CIII) and cytochrome c oxidase (complex IV, CIV), that cooperate to transfer electrons derived from NADH and succinate to molecular oxygen, creating an electrochemical gradient over the inner membrane that drives transmembrane transport and the ATP synthase. Cytochrome c oxidase is the component of the respiratory chain that catalyzes the reduction of oxygen to water. Electrons originating from reduced cytochrome c in the intermembrane space (IMS) are transferred via the dinuclear copper A center (CU(A)) of subunit 2 and heme A of subunit 1 to the active site in subunit 1, a binuclear center (BNC) formed by heme A3 and copper B (CU(B)). The BNC reduces molecular oxygen to 2 water molecules using 4 electrons from cytochrome c in the IMS and 4 protons from the mitochondrial matrix. The sequence is that of Cytochrome c oxidase subunit 5B heart, mitochondrial from Oncorhynchus mykiss (Rainbow trout).